A 252-amino-acid polypeptide reads, in one-letter code: Phosphomannomutase (252 aa).

Asp13 acts as the Nucleophile in catalysis. Positions 13 and 15 each coordinate Mg(2+). Residue Asp15 is the Proton donor/acceptor of the active site. Alpha-D-mannose 1-phosphate is bound by residues Arg22, Arg124, Arg135, Arg142, Ser180, and Asp182. 3 residues coordinate Mg(2+): Asp208, Tyr220, and Thr225.

This sequence belongs to the eukaryotic PMM family. In terms of assembly, homodimer. Requires Mg(2+) as cofactor.

The protein localises to the cytoplasm. The catalysed reaction is alpha-D-mannose 1-phosphate = D-mannose 6-phosphate. It participates in nucleotide-sugar biosynthesis; GDP-alpha-D-mannose biosynthesis; alpha-D-mannose 1-phosphate from D-fructose 6-phosphate: step 2/2. Its function is as follows. Catalyzes the interconversion of mannose-6-phosphate to mannose-1-phosphate, the precursor for the synthesis of GDP-mannose. GDP-mannose is an essential sugar nucleotide for the synthesis of D-mannose-containing cell wall polysaccharides (galactomannans and glucomannans), glycolipids, glycoproteins and the antioxidant L-ascorbate. Can complement the yeast temperature-sensitive mutant sec53-6. This is Phosphomannomutase from Solanum lycopersicum (Tomato).